We begin with the raw amino-acid sequence, 434 residues long: Adenylosuccinate synthetase (434 aa).

GTP-binding positions include 15-21 (GDEGKGK) and 43-45 (GHT). The active-site Proton acceptor is the Asp16. Mg(2+)-binding residues include Asp16 and Gly43. IMP is bound by residues 16 to 19 (DEGK), 41 to 44 (NAGH), Thr133, Arg147, Gln228, Thr243, and Arg307. His44 (proton donor) is an active-site residue. Substrate is bound at residue 303 to 309 (SVTGRAR). Residues Arg309, 335 to 337 (KLD), and 418 to 420 (STG) each bind GTP.

The protein belongs to the adenylosuccinate synthetase family. In terms of assembly, homodimer. The cofactor is Mg(2+).

It localises to the cytoplasm. The enzyme catalyses IMP + L-aspartate + GTP = N(6)-(1,2-dicarboxyethyl)-AMP + GDP + phosphate + 2 H(+). It functions in the pathway purine metabolism; AMP biosynthesis via de novo pathway; AMP from IMP: step 1/2. Its function is as follows. Plays an important role in the de novo pathway of purine nucleotide biosynthesis. Catalyzes the first committed step in the biosynthesis of AMP from IMP. This chain is Adenylosuccinate synthetase, found in Neisseria meningitidis serogroup C / serotype 2a (strain ATCC 700532 / DSM 15464 / FAM18).